We begin with the raw amino-acid sequence, 601 residues long: 4-hydroxy-3-methylbut-2-en-1-yl diphosphate synthase (flavodoxin) (601 aa).

Residues Cys507, Cys510, Cys542, and Glu549 each coordinate [4Fe-4S] cluster.

This sequence belongs to the IspG family. Requires [4Fe-4S] cluster as cofactor.

The catalysed reaction is (2E)-4-hydroxy-3-methylbut-2-enyl diphosphate + oxidized [flavodoxin] + H2O + 2 H(+) = 2-C-methyl-D-erythritol 2,4-cyclic diphosphate + reduced [flavodoxin]. Its pathway is isoprenoid biosynthesis; isopentenyl diphosphate biosynthesis via DXP pathway; isopentenyl diphosphate from 1-deoxy-D-xylulose 5-phosphate: step 5/6. Converts 2C-methyl-D-erythritol 2,4-cyclodiphosphate (ME-2,4cPP) into 1-hydroxy-2-methyl-2-(E)-butenyl 4-diphosphate. The protein is 4-hydroxy-3-methylbut-2-en-1-yl diphosphate synthase (flavodoxin) of Chlamydia muridarum (strain MoPn / Nigg).